Reading from the N-terminus, the 133-residue chain is P2Y purinoceptor 2 (133 aa).

The Cytoplasmic portion of the chain corresponds to 1–26; sequence ISVHRCLGVLRPLHSLRWGRARYARR. Residues 27–47 traverse the membrane as a helical segment; sequence VAFAVWVLVLYCQAPVLYFVT. At 48–74 the chain is on the extracellular side; that stretch reads TSTRSSRIICHDTSARELFSHFVAYSS. A helical transmembrane segment spans residues 75-95; the sequence is VMLSLLFAAPFAVILVCYVLM. Over 96-116 the chain is Cytoplasmic; the sequence is ARRLLKPAYGTSGGLPRAKRK. A helical transmembrane segment spans residues 117–133; sequence SVRTIAIVLTVFVLCFL.

It belongs to the G-protein coupled receptor 1 family.

The protein resides in the cell membrane. Receptor for ATP and UTP coupled to G-proteins that activate a phosphatidylinositol-calcium second messenger system. This chain is P2Y purinoceptor 2 (P2RY2), found in Bos taurus (Bovine).